Here is an 894-residue protein sequence, read N- to C-terminus: Translation initiation factor IF-2 (894 aa).

A disordered region spans residues 47-305 (AHLNRENGSG…GSALQQSFQK (259 aa)). Positions 68–82 (STLNIPGTGGKSKSV) are enriched in polar residues. Composition is skewed to basic and acidic residues over residues 93-159 (VKRD…KDKV) and 166-219 (DMTK…KWTD). Residues 254-269 (GRSRNAKAARPAKKGN) are compositionally biased toward basic residues. The span at 270–283 (KHSESKADREEARA) shows a compositional bias: basic and acidic residues. The 170-residue stretch at 393–562 (PRAPVVTIMG…LLQAEVLELK (170 aa)) folds into the tr-type G domain. The tract at residues 402–409 (GHVDHGKT) is G1. 402-409 (GHVDHGKT) contributes to the GTP binding site. Residues 427–431 (GITQH) form a G2 region. The tract at residues 448–451 (DTPG) is G3. GTP-binding positions include 448 to 452 (DTPGH) and 502 to 505 (NKID). The tract at residues 502–505 (NKID) is G4. The G5 stretch occupies residues 538–540 (SAK).

Belongs to the TRAFAC class translation factor GTPase superfamily. Classic translation factor GTPase family. IF-2 subfamily.

The protein resides in the cytoplasm. In terms of biological role, one of the essential components for the initiation of protein synthesis. Protects formylmethionyl-tRNA from spontaneous hydrolysis and promotes its binding to the 30S ribosomal subunits. Also involved in the hydrolysis of GTP during the formation of the 70S ribosomal complex. The chain is Translation initiation factor IF-2 from Citrobacter koseri (strain ATCC BAA-895 / CDC 4225-83 / SGSC4696).